A 328-amino-acid polypeptide reads, in one-letter code: Phosphate acyltransferase (328 aa).

Belongs to the PlsX family. Homodimer. Probably interacts with PlsY.

The protein localises to the cytoplasm. It carries out the reaction a fatty acyl-[ACP] + phosphate = an acyl phosphate + holo-[ACP]. Its pathway is lipid metabolism; phospholipid metabolism. In terms of biological role, catalyzes the reversible formation of acyl-phosphate (acyl-PO(4)) from acyl-[acyl-carrier-protein] (acyl-ACP). This enzyme utilizes acyl-ACP as fatty acyl donor, but not acyl-CoA. This chain is Phosphate acyltransferase, found in Staphylococcus aureus (strain MSSA476).